The sequence spans 859 residues: DNA mismatch repair protein MutS (859 aa).

617-624 (GPNMGGKS) provides a ligand contact to ATP. Positions 801–820 (TSLPHEVAPQAPGKPSVPQQ) are disordered.

This sequence belongs to the DNA mismatch repair MutS family.

This protein is involved in the repair of mismatches in DNA. It is possible that it carries out the mismatch recognition step. This protein has a weak ATPase activity. This chain is DNA mismatch repair protein MutS, found in Pseudomonas fluorescens (strain ATCC BAA-477 / NRRL B-23932 / Pf-5).